The chain runs to 1930 residues: Ankyrin repeat domain-containing protein SAT10 (1930 aa).

20 ANK repeats span residues 840 to 872 (FRHT…DLEE), 878 to 908 (GTWN…GVLN), 920 to 949 (SGNT…MRGY), 959 to 989 (QRSS…DYSK), 993 to 1023 (NGAS…FSNE), 1073 to 1102 (SGLT…DANG), 1106 to 1135 (EFEA…TKTE), 1144 to 1174 (GRTR…QLSH), 1178 to 1205 (NQRT…ETET), 1206 to 1235 (GLQE…EINA), 1239 to 1268 (YGNT…RLDL), 1272 to 1301 (DNVN…DVNA), 1304 to 1333 (GGDT…KFIL), 1339 to 1368 (RFEN…ERDL), 1400 to 1429 (SGWT…GRAA), 1514 to 1543 (QNML…SLTP), 1548 to 1577 (RHGT…MLAD), 1615 to 1644 (MGRN…NEDL), 1651 to 1680 (DGWT…KIFD), and 1696 to 1724 (KTWT…TTSD).

The protein operates within mycotoxin biosynthesis. In terms of biological role, ankyrin repeat domain-containing protein; part of the satratoxin SC1 cluster involved in the biosynthesis of satratoxins, trichothecene mycotoxins that are associated with human food poisonings. Satratoxins are suggested to be made by products of multiple gene clusters (SC1, SC2 and SC3) that encode 21 proteins in all, including polyketide synthases, acetyltransferases, and other enzymes expected to modify the trichothecene skeleton. SC1 encodes 10 proteins, SAT1 to SAT10. The largest are SAT8, which encodes a putative polyketide synthase (PKS) with a conventional non-reducing architecture, and SAT10, a putative protein containing four ankyrin repeats and thus may be involved in protein scaffolding. The putative short-chain reductase SAT3 may assist the PKS in some capacity. SAT6 contains a secretory lipase domain and acts probably as a trichothecene esterase. SAT5 encodes a putative acetyltransferase, and so, with SAT6, may affect endogenous protection from toxicity. The probable transcription factor SAT9 may regulate the expression of the SC1 cluster. SC2 encodes proteins SAT11 to SAT16, the largest of which encodes the putative reducing PKS SAT13. SAT11 is a cytochrome P450 monooxygenase, while SAT14 and SAT16 are probable acetyltransferases. The SC2 cluster may be regulated by the transcription factor SAT15. SC3 is a small cluster that encodes 5 proteins, SAT17 to SAT21. SAT21 is a putative MFS-type transporter which may have a role in exporting secondary metabolites. The four other proteins putatively encoded in SC3 include the taurine hydroxylase-like protein SAT17, the O-methyltransferase SAT18, the acetyltransferase SAT19, and the Cys6-type zinc finger SAT20, the latter being probably involved in regulation of SC3 expression. This is Ankyrin repeat domain-containing protein SAT10 from Stachybotrys chartarum (strain CBS 109288 / IBT 7711) (Toxic black mold).